We begin with the raw amino-acid sequence, 287 residues long: uncharacterized protein (287 aa).

In terms of domain architecture, ATP-grasp spans 115-287 (SLLSKETIKS…KKFLKKKLIS (173 aa)).

This is an uncharacterized protein from Mycoplasma genitalium (strain ATCC 33530 / DSM 19775 / NCTC 10195 / G37) (Mycoplasmoides genitalium).